The following is a 946-amino-acid chain: Inositol-trisphosphate 3-kinase B (946 aa).

Disordered stretches follow at residues 19-128 (EMKS…EEAK), 156-288 (AQSS…TRSC), 308-472 (ARVT…GIPS), 486-561 (KDLK…RKAC), and 580-638 (GALE…HTLD). Phosphoserine is present on residues Ser-43, Ser-49, and Ser-71. Low complexity predominate over residues 83–105 (NSSSGSGSGSSGSSVSSPSWAGR). 2 positions are modified to phosphoserine: Ser-204 and Ser-269. The segment covering 396–411 (TTVSVQSAESSDSLSW) has biased composition (polar residues). Residues 445–458 (GGSPTLGLLGGSPS) are compositionally biased toward low complexity. Positions 524-534 (TGVQSEGTWES) are enriched in polar residues. A compositionally biased stretch (low complexity) spans 599–612 (SSSSASSTGFSSSY). ATP is bound by residues Ser-679, Lys-690, 730–732 (DDL), and Asp-743. Substrate is bound by residues Lys-745 and Arg-766. The segment at 768-776 (DMYQKMIEV) is calmodulin-binding. Position 793-800 (793-800 (KPRYMQWR)) interacts with substrate. Residues Lys-817 and Asp-897 each contribute to the ATP site. Lys-900 contacts substrate.

The protein belongs to the inositol phosphokinase (IPK) family. Interacts with DMTN.

The protein resides in the cytoplasm. It localises to the cytoskeleton. It is found in the endoplasmic reticulum. It catalyses the reaction 1D-myo-inositol 1,4,5-trisphosphate + ATP = 1D-myo-inositol 1,3,4,5-tetrakisphosphate + ADP + H(+). Its activity is regulated as follows. IP3K is activated by calcium and calmodulin. Form B is much more sensitive to calcium/calmodulin than form A. Catalyzes the phosphorylation of 1D-myo-inositol 1,4,5-trisphosphate (InsP3) into 1D-myo-inositol 1,3,4,5-tetrakisphosphate and participates to the regulation of calcium homeostasis. This chain is Inositol-trisphosphate 3-kinase B, found in Homo sapiens (Human).